Reading from the N-terminus, the 445-residue chain is MARRRKQLPETPEPASIETLSHDGRGIARRDGKTTFIDNALPGEEVMFKFTYMRRKFDEGKAVEIVTASPDRVTPPCEHSTLCGGCSLQHMSPEVQVSRKQAVLREQLAHFGGLEPEEWLAPLTGPVTGYRSKARMGVKYVEAKGETLVGFREKRNSFIAQLHTCEVLIPDVGHRIDELRTLMHGLESRSRIPQIELAAGDDDVALIIRHLDPLSEADQQALLGFCQNLGWHCYLQPGNESTVHRIWPQEGEQRLYYKHPSAGVELAFHPTDFTQVNAEINRKMVPLALDLLDISPDHTVLDLFCGLGNFTIPAAKRAGKVVGVEVSQAMVERGYENARRNSLENLEFHAWDLSQDVSGQAWARQTYDRILIDPPRTGALEMVKLMPRLGASKIVYVSCNPATLARDAGELMALGYRLKAAGVMDMFPHTTHVESIAVFEKMKKK.

The disordered stretch occupies residues 1–21 (MARRRKQLPETPEPASIETLS). In terms of domain architecture, TRAM spans 5-64 (RKQLPETPEPASIETLSHDGRGIARRDGKTTFIDNALPGEEVMFKFTYMRRKFDEGKAVE). [4Fe-4S] cluster-binding residues include Cys77, Cys83, Cys86, and Cys165. The S-adenosyl-L-methionine site is built by Gln275, Phe304, Asn309, Glu325, Asp352, and Asp373. Residue Cys399 is the Nucleophile of the active site.

Belongs to the class I-like SAM-binding methyltransferase superfamily. RNA M5U methyltransferase family. RlmD subfamily.

It carries out the reaction uridine(1939) in 23S rRNA + S-adenosyl-L-methionine = 5-methyluridine(1939) in 23S rRNA + S-adenosyl-L-homocysteine + H(+). Catalyzes the formation of 5-methyl-uridine at position 1939 (m5U1939) in 23S rRNA. The protein is 23S rRNA (uracil(1939)-C(5))-methyltransferase RlmD of Alcanivorax borkumensis (strain ATCC 700651 / DSM 11573 / NCIMB 13689 / SK2).